The chain runs to 344 residues: Nicotinate-nucleotide--dimethylbenzimidazole phosphoribosyltransferase (344 aa).

The Proton acceptor role is filled by Glu-310.

This sequence belongs to the CobT family.

It carries out the reaction 5,6-dimethylbenzimidazole + nicotinate beta-D-ribonucleotide = alpha-ribazole 5'-phosphate + nicotinate + H(+). The protein operates within nucleoside biosynthesis; alpha-ribazole biosynthesis; alpha-ribazole from 5,6-dimethylbenzimidazole: step 1/2. Functionally, catalyzes the synthesis of alpha-ribazole-5'-phosphate from nicotinate mononucleotide (NAMN) and 5,6-dimethylbenzimidazole (DMB). The chain is Nicotinate-nucleotide--dimethylbenzimidazole phosphoribosyltransferase from Chromobacterium violaceum (strain ATCC 12472 / DSM 30191 / JCM 1249 / CCUG 213 / NBRC 12614 / NCIMB 9131 / NCTC 9757 / MK).